We begin with the raw amino-acid sequence, 303 residues long: MSFTTQVKEEILNLDSADKNELSAIIKMSGSLGLADKKLSLSIITENAKIARHIYALLERLYRINPEIKYHHKTNLRKNRVYTVFLDDNVEQILADLQLSDSFFGIETGIEQQILSDDNAGRSYLKGAFLSTGSIRDPESGKYQLEIFSVYLDHAEDLAKLMQKFMLDTKVIEHKHGAVTYLQKAEDIMDFLIIIGSMEGMEAFENIKVMRETRNDVNRTSNAETANIAKTINASIKTINNINKIKETVGLESLPIELQRIAQIRAAHPDFSIQQIADSLAVPLTKSGVNHRLRKINKIAEDL.

Positions 272-303 (SIQQIADSLAVPLTKSGVNHRLRKINKIAEDL) form a DNA-binding region, H-T-H motif.

The protein belongs to the WhiA family.

In terms of biological role, involved in cell division and chromosome segregation. In Streptococcus mutans serotype c (strain ATCC 700610 / UA159), this protein is Probable cell division protein WhiA.